The chain runs to 190 residues: CDP-diacylglycerol--glycerol-3-phosphate 3-phosphatidyltransferase (190 aa).

Topologically, residues 6–17 (GVFNIPMYLTLF) are cytoplasmic. The chain crosses the membrane as a helical span at residues 18–42 (RIIMVPCFVAVFYWPIYWSPMLCTL). The Periplasmic segment spans residues 43-65 (IFFIAAITDWFDGFLARRWNQTS). Residues 66–86 (RIGGFLDPIADKIMIITALIL) traverse the membrane as a helical segment. Over 87–91 (ISEHF) the chain is Cytoplasmic. Residues 92–112 (HVWWMTLPISSIIIREILISS) traverse the membrane as a helical segment. Over 113–150 (LRECIARVDNKNNISVIWLSKVKTFAQMLALIALLCRL) the chain is Periplasmic. The helical transmembrane segment at 151 to 173 (NEWTVIMGVISLYTAMLLTLWSM) threads the bilayer. Residues 174 to 186 (CYYVYSVSSILLQ) lie on the Cytoplasmic side of the membrane.

This sequence belongs to the CDP-alcohol phosphatidyltransferase class-I family.

Its subcellular location is the cell inner membrane. The catalysed reaction is a CDP-1,2-diacyl-sn-glycerol + sn-glycerol 3-phosphate = a 1,2-diacyl-sn-glycero-3-phospho-(1'-sn-glycero-3'-phosphate) + CMP + H(+). The protein operates within phospholipid metabolism; phosphatidylglycerol biosynthesis; phosphatidylglycerol from CDP-diacylglycerol: step 1/2. In terms of biological role, catalyzes the conversion of cytidine diphosphate diacylglycerol (CDP-DG) and glycerol 3-phosphate into phosphatidylglycerol. Essential for the synthesis of anionic phospholipids, thereby playing a role in balancing the ratio of zwitterionic and anionic phospholipids, which is thought to be important for normal membrane function. This is CDP-diacylglycerol--glycerol-3-phosphate 3-phosphatidyltransferase from Blochmanniella floridana.